Consider the following 352-residue polypeptide: Beta-hexosaminidase (352 aa).

Residues D74, R82, R149, and K179–H180 contribute to the substrate site. H192 serves as the catalytic Proton donor/acceptor. Catalysis depends on D263, which acts as the Nucleophile.

It belongs to the glycosyl hydrolase 3 family. NagZ subfamily.

Its subcellular location is the cytoplasm. It carries out the reaction Hydrolysis of terminal non-reducing N-acetyl-D-hexosamine residues in N-acetyl-beta-D-hexosaminides.. The protein operates within cell wall biogenesis; peptidoglycan recycling. Functionally, plays a role in peptidoglycan recycling by cleaving the terminal beta-1,4-linked N-acetylglucosamine (GlcNAc) from peptide-linked peptidoglycan fragments, giving rise to free GlcNAc, anhydro-N-acetylmuramic acid and anhydro-N-acetylmuramic acid-linked peptides. This Bordetella pertussis (strain Tohama I / ATCC BAA-589 / NCTC 13251) protein is Beta-hexosaminidase.